An 808-amino-acid chain; its full sequence is Phenylalanine--tRNA ligase beta subunit (808 aa).

Residues 40-155 (NQGATGVVVG…DDVEIGSDAL (116 aa)) enclose the tRNA-binding domain. Residues 409 to 484 (IEEPVVSLNL…RLYGYDNIPT (76 aa)) enclose the B5 domain. Mg(2+) is bound by residues Asp-462, Asp-468, Glu-471, and Glu-472. The FDX-ACB domain occupies 714 to 807 (PRFPAISRDI…LEASTGAVLR (94 aa)).

This sequence belongs to the phenylalanyl-tRNA synthetase beta subunit family. Type 1 subfamily. Tetramer of two alpha and two beta subunits. Mg(2+) is required as a cofactor.

Its subcellular location is the cytoplasm. The enzyme catalyses tRNA(Phe) + L-phenylalanine + ATP = L-phenylalanyl-tRNA(Phe) + AMP + diphosphate + H(+). This Halalkalibacterium halodurans (strain ATCC BAA-125 / DSM 18197 / FERM 7344 / JCM 9153 / C-125) (Bacillus halodurans) protein is Phenylalanine--tRNA ligase beta subunit (pheT).